The sequence spans 88 residues: Apolipoprotein C-I (88 aa).

Positions 1–26 are cleaved as a signal peptide; sequence MRLFLSLPVLVVVLAMVLEGPAPAQA.

It belongs to the apolipoprotein C1 family.

It is found in the secreted. Functionally, inhibitor of lipoprotein binding to the low density lipoprotein (LDL) receptor, LDL receptor-related protein, and very low density lipoprotein (VLDL) receptor. Associates with high density lipoproteins (HDL) and the triacylglycerol-rich lipoproteins in the plasma and makes up about 10% of the protein of the VLDL and 2% of that of HDL. Appears to interfere directly with fatty acid uptake and is also the major plasma inhibitor of cholesteryl ester transfer protein (CETP). Binds free fatty acids and reduces their intracellular esterification. Modulates the interaction of APOE with beta-migrating VLDL and inhibits binding of beta-VLDL to the LDL receptor-related protein. The polypeptide is Apolipoprotein C-I (APOC1) (Ailurus fulgens (Himalayan red panda)).